Here is a 190-residue protein sequence, read N- to C-terminus: Ribonuclease HII (190 aa).

In terms of domain architecture, RNase H type-2 spans 1-190 (MAGVDEVGRG…FCRKIIENPD (190 aa)). Asp5, Glu6, and Asp101 together coordinate a divalent metal cation.

The protein belongs to the RNase HII family. It depends on Mn(2+) as a cofactor. Requires Mg(2+) as cofactor.

Its subcellular location is the cytoplasm. The catalysed reaction is Endonucleolytic cleavage to 5'-phosphomonoester.. In terms of biological role, endonuclease that specifically degrades the RNA of RNA-DNA hybrids. This is Ribonuclease HII (rnhB) from Synechocystis sp. (strain ATCC 27184 / PCC 6803 / Kazusa).